The sequence spans 108 residues: uncharacterized protein (108 aa).

This sequence belongs to the baculoviridae 11 kDa protein family.

This is an uncharacterized protein from Orgyia pseudotsugata (Douglas-fir tussock moth).